Here is a 240-residue protein sequence, read N- to C-terminus: Aliphatic sulfonates import ATP-binding protein SsuB (240 aa).

The ABC transporter domain maps to 6 to 227; that stretch reads IQLSKLRKNF…VKDRHFACFE (222 aa). An ATP-binding site is contributed by 38 to 45; it reads GESGCGKS.

This sequence belongs to the ABC transporter superfamily. Aliphatic sulfonates importer (TC 3.A.1.17.2) family. The complex is composed of two ATP-binding proteins (SsuB), two transmembrane proteins (SsuC) and a solute-binding protein (SsuA).

It is found in the cell inner membrane. It carries out the reaction ATP + H2O + aliphatic sulfonate-[sulfonate-binding protein]Side 1 = ADP + phosphate + aliphatic sulfonateSide 2 + [sulfonate-binding protein]Side 1.. Part of the ABC transporter complex SsuABC involved in aliphatic sulfonates import. Responsible for energy coupling to the transport system. The polypeptide is Aliphatic sulfonates import ATP-binding protein SsuB (Zymomonas mobilis subsp. mobilis (strain ATCC 31821 / ZM4 / CP4)).